Here is a 90-residue protein sequence, read N- to C-terminus: MANSAQAKKRARQNEKRELHNASQRSAVRTAVKKILKSLQANDSSAAQSAYQHAVQILDKAAGRRIIHPNKAARLKSRLSQKIKNLSSSQ.

The interval 1-27 is disordered; sequence MANSAQAKKRARQNEKRELHNASQRSA.

The protein belongs to the bacterial ribosomal protein bS20 family.

Functionally, binds directly to 16S ribosomal RNA. The chain is Small ribosomal subunit protein bS20 from Coxiella burnetii (strain CbuK_Q154) (Coxiella burnetii (strain Q154)).